The primary structure comprises 229 residues: N-(5'-phosphoribosyl)anthranilate isomerase (229 aa).

Belongs to the TrpF family.

The catalysed reaction is N-(5-phospho-beta-D-ribosyl)anthranilate = 1-(2-carboxyphenylamino)-1-deoxy-D-ribulose 5-phosphate. It participates in amino-acid biosynthesis; L-tryptophan biosynthesis; L-tryptophan from chorismate: step 3/5. The protein is N-(5'-phosphoribosyl)anthranilate isomerase of Clostridium beijerinckii (strain ATCC 51743 / NCIMB 8052) (Clostridium acetobutylicum).